The chain runs to 659 residues: Hemocyanin subunit B (659 aa).

An N-terminal signal peptide occupies residues 1–18 (MVAKWCVLAMCLLVAVGA). Residues H198, H202, and H232 each coordinate Cu cation. The N-linked (GlcNAc...) asparagine glycan is linked to N318. The Cu cation site is built by H353, H357, and H393. C562 and C609 are joined by a disulfide.

Belongs to the tyrosinase family. Hemocyanin subfamily. In terms of assembly, 36-chain polymer consisting of 6 hexamers, each of which includes 4 different chains, A, B, C and D. In terms of tissue distribution, hemolymph.

It localises to the secreted. It is found in the extracellular space. In terms of biological role, hemocyanins are copper-containing oxygen carriers occurring freely dissolved in the hemolymph of many mollusks and arthropods. The protein is Hemocyanin subunit B (HCB) of Scutigera coleoptrata (House centipede).